The sequence spans 237 residues: E3 ubiquitin-protein ligase RNF166 (237 aa).

An RING-type zinc finger spans residues 33 to 73 (CPICLEVYHRPVAIGSCGHTFCGECLQPCLQVPSPLCPLCR). Zn(2+)-binding residues include C98, C101, H113, and C117. The segment at 98-117 (CRGCNKKVTLAKMRVHISSC) adopts a C2HC RNF-type zinc-finger fold. In terms of domain architecture, UIM spans 221–237 (DEEAAFQAALALSLSEN).

The protein resides in the cytoplasm. It catalyses the reaction S-ubiquitinyl-[E2 ubiquitin-conjugating enzyme]-L-cysteine + [acceptor protein]-L-lysine = [E2 ubiquitin-conjugating enzyme]-L-cysteine + N(6)-ubiquitinyl-[acceptor protein]-L-lysine.. It functions in the pathway protein modification; protein ubiquitination. E3 ubiquitin-protein ligase that promotes the ubiquitination of different substrates. In turn, participates in different biological processes including interferon production or autophagy. Plays a role in the activation of RNA virus-induced interferon-beta production by promoting the ubiquitination of TRAF3 and TRAF6. Also plays a role in the early recruitment of autophagy adapters to bacteria. Mediates 'Lys-29' and 'Lys-33'-linked ubiquitination of SQSTM1 leading to xenophagic targeting of bacteria and inhibition of their replication. This chain is E3 ubiquitin-protein ligase RNF166 (RNF166), found in Homo sapiens (Human).